Consider the following 189-residue polypeptide: Xanthine phosphoribosyltransferase (189 aa).

Xanthine contacts are provided by Leu-20 and Asn-27. A 5-phospho-alpha-D-ribose 1-diphosphate-binding site is contributed by 128-132 (ANGEA). A xanthine-binding site is contributed by Lys-156.

This sequence belongs to the purine/pyrimidine phosphoribosyltransferase family. Xpt subfamily. As to quaternary structure, homodimer.

It is found in the cytoplasm. The catalysed reaction is XMP + diphosphate = xanthine + 5-phospho-alpha-D-ribose 1-diphosphate. The protein operates within purine metabolism; XMP biosynthesis via salvage pathway; XMP from xanthine: step 1/1. Converts the preformed base xanthine, a product of nucleic acid breakdown, to xanthosine 5'-monophosphate (XMP), so it can be reused for RNA or DNA synthesis. The protein is Xanthine phosphoribosyltransferase of Lactobacillus delbrueckii subsp. bulgaricus (strain ATCC 11842 / DSM 20081 / BCRC 10696 / JCM 1002 / NBRC 13953 / NCIMB 11778 / NCTC 12712 / WDCM 00102 / Lb 14).